Reading from the N-terminus, the 95-residue chain is Large ribosomal subunit protein bL25 (95 aa).

It belongs to the bacterial ribosomal protein bL25 family. In terms of assembly, part of the 50S ribosomal subunit; part of the 5S rRNA/L5/L18/L25 subcomplex. Contacts the 5S rRNA. Binds to the 5S rRNA independently of L5 and L18.

In terms of biological role, this is one of the proteins that binds to the 5S RNA in the ribosome where it forms part of the central protuberance. In Buchnera aphidicola subsp. Acyrthosiphon pisum (strain 5A), this protein is Large ribosomal subunit protein bL25.